The sequence spans 514 residues: Na(+)/H(+) antiporter NhaB (514 aa).

12 helical membrane-spanning segments follow: residues 23 to 43 (LALLVFLIINPFIFLANPFIA), 63 to 83 (PLLPGGLLAIEAVIIGMTSAA), 97 to 117 (LLLMFMVAGIYFMKQLLLFIF), 120 to 140 (LLLSIRSKMVLSLAFCVAAAF), 144 to 164 (FLDALTVVAVVISVAVGFYGI), 202 to 222 (LMMHAGVGTALGGVMTMVGEP), 238 to 258 (FFLRMSPVTVPVLVCGLLTCM), 303 to 323 (AVIGVWLVTALALHLAEVGLI), 357 to 377 (LTVFFSIVAVIIDQHLFAPII), 391 to 411 (LFYLFNGLLSSISDNVFVGTI), 447 to 467 (ATPNGQAAFLFLLTSALAPLI), and 475 to 495 (VWMALPYTIVLTLIGLLCVEF).

This sequence belongs to the NhaB Na(+)/H(+) (TC 2.A.34) antiporter family.

Its subcellular location is the cell inner membrane. It carries out the reaction 2 Na(+)(in) + 3 H(+)(out) = 2 Na(+)(out) + 3 H(+)(in). Functionally, na(+)/H(+) antiporter that extrudes sodium in exchange for external protons. This chain is Na(+)/H(+) antiporter NhaB, found in Salmonella newport (strain SL254).